The primary structure comprises 409 residues: MPESLAERARSTLLKAQVLCREVESRIAEVKDRLSQWEKNRHTLRFLVSCLEHQLGFLEQCALRQGIGRALIETEWSQVVLVDLVNEMKLWYDKIQLRLERLDQVENILVADNKHLSHYISQEQALVLKKRLDEVPIIRPQIENIQTQYDTMCKRVRQKLINKRLTEIKTIFDSQFGDELTETAELTEVKPRDLDSIELELVDYINSLTDHFDKCQALEKGLFNDSNEYDELLKIVSADDSQLDDIMKHLLNTIDSTNHQIDKVYEILDIKTKQKTILHGKINELIANCTKYSEYLAIFKGIATSIEKFKEGCMQDIQLTKELYKFYDEFENSYNKLLQEVQRRRALSQKMLGIIKNCENELKTLHDEDQKLRTHFLSENGAFLPETIWPGEIDDLSPLYALDYHIKEI.

The protein belongs to the ATG17 family.

It is found in the cytoplasm. It localises to the preautophagosomal structure membrane. Functionally, autophagy-specific protein that functions in response to autophagy-inducing signals as a scaffold to recruit other ATG proteins to organize pre-autophagosomal structure (PAS) formation. Modulates the timing and magnitude of the autophagy response, such as the size of the sequestering vesicles. Plays particularly a role in pexophagy and nucleophagy. The polypeptide is Autophagy-related protein 17 (ATG17) (Candida glabrata (strain ATCC 2001 / BCRC 20586 / JCM 3761 / NBRC 0622 / NRRL Y-65 / CBS 138) (Yeast)).